The primary structure comprises 796 residues: High affinity nerve growth factor receptor (796 aa).

The signal sequence occupies residues 1 to 32; the sequence is MLRGGRRGQLGWHSWAAGPGSLLAWLILASAG. Topologically, residues 33-423 are extracellular; it reads AAPCPDACCP…TPFGVSVAVG (391 aa). 2 cysteine pairs are disulfide-bonded: C36–C41 and C40–C50. 13 N-linked (GlcNAc...) asparagine glycosylation sites follow: N67, N95, N121, N188, N202, N253, N262, N281, N318, N323, N338, N358, and N401. 2 LRR repeats span residues 90-113 and 116-137; these read LGEL…AFHF and RLSR…TVQG. The 46-residue stretch at 148–193 folds into the LRRCT domain; that stretch reads NPLHCSCALRWLQRWEEEGLGGVPEQKLQCHGQGPLAHMPNASCGV. Residues C154 and C191 are joined by a disulfide bond. 2 consecutive Ig-like C2-type domains span residues 194 to 283 and 299 to 365; these read PTLK…VNVS and WCIP…LAAN. Cysteines 215 and 265 form a disulfide. A disulfide bridge links C300 with C345. A helical membrane pass occupies residues 424–439; that stretch reads LAVFACLFLSTLLLVL. Over 440 to 796 the chain is Cytoplasmic; it reads NKCGRRNKFG…APPVYLDVLG (357 aa). Positions 469–490 are interaction with SQSTM1; that stretch reads MTLGGSSLSPTEGKGSGLQGHI. Residue Y496 is modified to Phosphotyrosine; by autocatalysis. One can recognise a Protein kinase domain in the interval 510–781; that stretch reads IVLKWELGEG…HSIKDVHARL (272 aa). 516–524 lines the ATP pocket; the sequence is LGEGAFGKV. Residues 537–541 carry the DXXLL motif; it reads DKMLV. Residue K544 coordinates ATP. The short motif at 607 to 611 is the DXXLL element; that stretch reads DAKLL. The active-site Proton acceptor is D650. 4 positions are modified to phosphotyrosine; by autocatalysis: Y676, Y680, Y681, and Y791.

It belongs to the protein kinase superfamily. Tyr protein kinase family. Insulin receptor subfamily. In terms of assembly, exists in a dynamic equilibrium between monomeric (low affinity) and dimeric (high affinity) structures. Homodimerization is induced by binding of a NGF dimer. Interacts with SQSTM1; bridges NTRK1 to NGFR. Forms a ternary complex with NGFR and KIDINS220; this complex is affected by the expression levels of KIDINS220 and an increase in KIDINS220 expression leads to a decreased association of NGFR and NTRK1. Interacts with SH2D1A; regulates NTRK1. Interacts (phosphorylated upon activation by NGF) with SHC1; mediates SHC1 phosphorylation and activation. Interacts (phosphorylated upon activation by NGF) with PLCG1; mediates PLCG1 phosphorylation and activation. Interacts (phosphorylated) with SH2B1 and SH2B2. Interacts with GRB2. Interacts with PIK3R1. Interacts with FRS2. Interacts with SORT1; may regulate NTRK1 anterograde axonal transport. Interacts with RAB7A. Found in a complex, at least composed of KIDINS220, MAGI2, NTRK1 and RAPGEF2; the complex is mainly formed at late endosomes in a nerve growth factor (NGF)-dependent manner. Interacts with RAPGEF2; the interaction is strengthened after NGF stimulation. Interacts with PTPRS. Interacts with USP36; USP36 does not deubiquitinate NTRK1. Interacts with GGA3. Interacts with TSPAN1; this interaction promotes NTRK1 stability. Ligand-mediated autophosphorylation. Interaction with SQSTM1 is phosphotyrosine-dependent. Autophosphorylation at Tyr-496 mediates interaction and phosphorylation of SHC1. In terms of processing, N-glycosylated. Isoform TrkA-I and isoform TrkA-II are N-glycosylated. Post-translationally, ubiquitinated. Undergoes polyubiquitination upon activation; regulated by NGFR. Ubiquitination by NEDD4L leads to degradation. Ubiquitination regulates the internalization of the receptor. As to expression, isoform TrkA-I is found in most non-neuronal tissues. Isoform TrkA-II is primarily expressed in neuronal cells. TrkA-III is specifically expressed by pluripotent neural stem and neural crest progenitors.

The protein localises to the cell membrane. It is found in the early endosome membrane. Its subcellular location is the late endosome membrane. It localises to the recycling endosome membrane. The enzyme catalyses L-tyrosyl-[protein] + ATP = O-phospho-L-tyrosyl-[protein] + ADP + H(+). With respect to regulation, the pro-survival signaling effect of NTRK1 in neurons requires its endocytosis into signaling early endosomes and its retrograde axonal transport. This is regulated by different proteins including CFL1, RAC1 and SORT1. NTF3 is unable to induce this signaling probably due to the lability of the NTF3-NTRK1 complex in endosomes. SH2D1A inhibits the autophosphorylation of the receptor, and alters the recruitment and activation of downstream effectors and signaling cascades. Regulated by NGFR. Functionally, receptor tyrosine kinase involved in the development and the maturation of the central and peripheral nervous systems through regulation of proliferation, differentiation and survival of sympathetic and nervous neurons. High affinity receptor for NGF which is its primary ligand. Can also bind and be activated by NTF3/neurotrophin-3. However, NTF3 only supports axonal extension through NTRK1 but has no effect on neuron survival. Upon dimeric NGF ligand-binding, undergoes homodimerization, autophosphorylation and activation. Recruits, phosphorylates and/or activates several downstream effectors including SHC1, FRS2, SH2B1, SH2B2 and PLCG1 that regulate distinct overlapping signaling cascades driving cell survival and differentiation. Through SHC1 and FRS2 activates a GRB2-Ras-MAPK cascade that regulates cell differentiation and survival. Through PLCG1 controls NF-Kappa-B activation and the transcription of genes involved in cell survival. Through SHC1 and SH2B1 controls a Ras-PI3 kinase-AKT1 signaling cascade that is also regulating survival. In absence of ligand and activation, may promote cell death, making the survival of neurons dependent on trophic factors. In terms of biological role, resistant to NGF, it constitutively activates AKT1 and NF-kappa-B and is unable to activate the Ras-MAPK signaling cascade. Antagonizes the anti-proliferative NGF-NTRK1 signaling that promotes neuronal precursors differentiation. Isoform TrkA-III promotes angiogenesis and has oncogenic activity when overexpressed. This chain is High affinity nerve growth factor receptor (NTRK1), found in Homo sapiens (Human).